We begin with the raw amino-acid sequence, 201 residues long: Large ribosomal subunit protein uL4 (201 aa).

A disordered region spans residues 44 to 68 (RAQKSRAEVSGSGRKPWRQKGTGRA).

Belongs to the universal ribosomal protein uL4 family. As to quaternary structure, part of the 50S ribosomal subunit.

One of the primary rRNA binding proteins, this protein initially binds near the 5'-end of the 23S rRNA. It is important during the early stages of 50S assembly. It makes multiple contacts with different domains of the 23S rRNA in the assembled 50S subunit and ribosome. Functionally, forms part of the polypeptide exit tunnel. The chain is Large ribosomal subunit protein uL4 from Buchnera aphidicola subsp. Acyrthosiphon pisum (strain APS) (Acyrthosiphon pisum symbiotic bacterium).